The chain runs to 432 residues: MPAIAIIGAQWGDEGKGKATDLLGTSVDYVVKFNGGNNAGHTVVITDASGHTEKYALHLLPSGILTPGCTPVIGNGVVVDLAVLFEELDALEQRGVDVSRLRISANAHVIADYNRTLDKVTERFLGSRRIGTTGRGIGPTYADKMNRIGIRVQDIFDEKILTQKVEGVLDLKNQVLTKIYNRRAATVEATVEELLAFADRLRPMVCDTGLLLNQALDRGETVLLEAGQATLLDVDHGTYPFVTSSSATAGGACTGSGIPPRRLEQVIGIVKAYTTRVGEGPFPTELHDDAGEHLRKVGAEFGTTTGRPRRCGWYDAVIARYAARVNGVTDFVLTKLDVLTGLEQVPVCVAYDVGGVRHDEMPVNQTDFHHAVPIYEYLPGWWEDISGARTLADLPANAQAYVKAVEEMSGARISAVGVGPSRDATVAIHDLI.

Residues 12–18 (GDEGKGK) and 40–42 (GHT) each bind GTP. D13 serves as the catalytic Proton acceptor. Residues D13 and G40 each contribute to the Mg(2+) site. IMP-binding positions include 13–16 (DEGK), 38–41 (NAGH), T133, R147, Q228, T243, and R307. The active-site Proton donor is H41. 303–309 (TTTGRPR) is a substrate binding site. GTP is bound by residues R309, 335–337 (KLD), and 417–419 (GVG).

It belongs to the adenylosuccinate synthetase family. As to quaternary structure, homodimer. Mg(2+) serves as cofactor.

The protein resides in the cytoplasm. It catalyses the reaction IMP + L-aspartate + GTP = N(6)-(1,2-dicarboxyethyl)-AMP + GDP + phosphate + 2 H(+). It functions in the pathway purine metabolism; AMP biosynthesis via de novo pathway; AMP from IMP: step 1/2. Plays an important role in the de novo pathway of purine nucleotide biosynthesis. Catalyzes the first committed step in the biosynthesis of AMP from IMP. The chain is Adenylosuccinate synthetase from Nocardioides sp. (strain ATCC BAA-499 / JS614).